A 574-amino-acid polypeptide reads, in one-letter code: Acyloxyacyl hydrolase (574 aa).

Positions 1–22 (MKFPWKVFKTTLLLLLLSHSLA) are cleaved as a signal peptide. Positions 23–33 (SVPSEDQPGDS) are excised as a propeptide. Residues 36 to 117 (HGQSCLGCVV…YALEFCKRGA (82 aa)) form the Saposin B-type domain. Residues 37-69 (GQSCLGCVVLVSVIEQLAEVHNSSVQVAMERLC) form an important for enzyme activity, localization to cytoplasmic vesicles, and protein stability region. 8 disulfides stabilise this stretch: C40–C113, C43–C107, C69–C82, C122–C452, C159–C168, C205–C229, C248–C328, and C375–C458. N58 carries an N-linked (GlcNAc...) asparagine glycan. The interval 172-176 (ELSIK) is lipopolysaccharide binding. The Ca(2+) site is built by D183, D185, D187, H189, D204, N206, D207, D209, V212, D222, D226, N228, N230, I232, and E244. N206 carries N-linked (GlcNAc...) asparagine glycosylation. The active site involves S262. 2 N-linked (GlcNAc...) asparagine glycosylation sites follow: N408 and N465.

As to quaternary structure, heterodimer of the large and small subunits; disulfide-linked. Ca(2+) serves as cofactor. Cleaved into a large and a small subunit. Post-translationally, the small subunit is N-glycosylated. Detected in peritoneal macrophages (at protein level). Strongly expressed in kidney cortex, where it may be produced by proximal tubule cells. In liver, expressed at high levels in Kupffer cells. Expressed by dendritic cells. Detected at low levels in alveolar macrophages.

It is found in the secreted. The protein resides in the cytoplasmic vesicle. It carries out the reaction a 3-(acyloxy)acyl derivative of bacterial toxin + H2O = a 3-hydroxyacyl derivative of bacterial toxin + a fatty acid + H(+). In terms of biological role, removes the secondary (acyloxyacyl-linked) fatty acyl chains from the lipid A region of bacterial lipopolysaccharides (LPS). By breaking down LPS, terminates the host response to bacterial infection and prevents prolonged and damaging inflammatory responses. In peritoneal macrophages, seems to be important for recovery from a state of immune tolerance following infection by Gram-negative bacteria. This Mus musculus (Mouse) protein is Acyloxyacyl hydrolase.